The following is a 430-amino-acid chain: uncharacterized protein (430 aa).

Helical transmembrane passes span 36 to 56, 69 to 89, 100 to 122, 126 to 148, 160 to 180, 197 to 217, 253 to 273, 285 to 305, 317 to 337, 340 to 360, 384 to 404, and 406 to 426; these read LFVV…GVTV, AFAG…ALIV, TGLS…AAII, FLLF…ARYA, TAVS…PSLV, GPFI…FIML, IIVG…IMTM, LGAV…PSLV, AMAI…AFAP, SMIL…FGLI, VLIA…VAGS, and YLAL…VVVW.

It belongs to the major facilitator superfamily.

The protein localises to the cell membrane. This is an uncharacterized protein from Bacillus subtilis (strain 168).